Consider the following 398-residue polypeptide: Succinate--CoA ligase [ADP-forming] subunit beta (398 aa).

Residues 9–254 enclose the ATP-grasp domain; the sequence is KRLLHTYGAP…LTEEDPKEIE (246 aa). Residues K46, 53-55, E109, A112, and E117 each bind ATP; that span reads GRG. Mg(2+)-binding residues include N209 and D223. Residues N274 and 331–333 contribute to the substrate site; that span reads GIM.

It belongs to the succinate/malate CoA ligase beta subunit family. Heterotetramer of two alpha and two beta subunits. Mg(2+) serves as cofactor.

It catalyses the reaction succinate + ATP + CoA = succinyl-CoA + ADP + phosphate. The catalysed reaction is GTP + succinate + CoA = succinyl-CoA + GDP + phosphate. It participates in carbohydrate metabolism; tricarboxylic acid cycle; succinate from succinyl-CoA (ligase route): step 1/1. In terms of biological role, succinyl-CoA synthetase functions in the citric acid cycle (TCA), coupling the hydrolysis of succinyl-CoA to the synthesis of either ATP or GTP and thus represents the only step of substrate-level phosphorylation in the TCA. The beta subunit provides nucleotide specificity of the enzyme and binds the substrate succinate, while the binding sites for coenzyme A and phosphate are found in the alpha subunit. In Brucella abortus (strain S19), this protein is Succinate--CoA ligase [ADP-forming] subunit beta.